A 190-amino-acid polypeptide reads, in one-letter code: MSEDTALVVGLGNPGPQYEKTRHNVGFMVAGVLSARMGGKFSAHKKSGAEIVQGRFEGRPTILAKPRSFMNLSGSAVAGLARFFSVDPGNIVVIHDELDLDFGTIRLKQGGGEGGHNGLRSISSALGTKDYLRTRVGIGRPPGRMDPASYVLKPFSSVERKELDLVCEESADAVELVLRVGLEAAQNRLH.

Tyr-18 provides a ligand contact to tRNA. His-23 (proton acceptor) is an active-site residue. Residues Phe-69, Asn-71, and Asn-117 each contribute to the tRNA site.

Belongs to the PTH family. In terms of assembly, monomer.

The protein localises to the cytoplasm. It catalyses the reaction an N-acyl-L-alpha-aminoacyl-tRNA + H2O = an N-acyl-L-amino acid + a tRNA + H(+). Functionally, hydrolyzes ribosome-free peptidyl-tRNAs (with 1 or more amino acids incorporated), which drop off the ribosome during protein synthesis, or as a result of ribosome stalling. Its function is as follows. Catalyzes the release of premature peptidyl moieties from peptidyl-tRNA molecules trapped in stalled 50S ribosomal subunits, and thus maintains levels of free tRNAs and 50S ribosomes. The chain is Peptidyl-tRNA hydrolase from Rhodococcus jostii (strain RHA1).